A 698-amino-acid chain; its full sequence is RNA cytosine-C(5)-methyltransferase NSUN2 (698 aa).

Residues 1 to 10 (MGRKNRRNRQ) show a composition bias toward basic residues. The interval 1 to 28 (MGRKNRRNRQRRTEQRSPAEEERRKARE) is disordered. A compositionally biased stretch (basic and acidic residues) spans 11 to 28 (RRTEQRSPAEEERRKARE). Residues 182-188 (CAAPGSK), Asp213, Asp240, and Asp266 each bind S-adenosyl-L-methionine. The active-site Nucleophile is Cys319. Positions 472-496 (AVDAENGETKPCTNQSGSSKTDSVC) are disordered. The span at 482-493 (PCTNQSGSSKTD) shows a compositional bias: polar residues.

This sequence belongs to the class I-like SAM-binding methyltransferase superfamily. RsmB/NOP family. TRM4 subfamily.

The protein localises to the nucleus. It localises to the nucleolus. Its subcellular location is the cytoplasm. The protein resides in the mitochondrion. It is found in the cytoskeleton. The protein localises to the spindle. It localises to the secreted. Its subcellular location is the extracellular exosome. It catalyses the reaction cytidine(48) in tRNA + S-adenosyl-L-methionine = 5-methylcytidine(48) in tRNA + S-adenosyl-L-homocysteine + H(+). The enzyme catalyses cytidine(49) in tRNA + S-adenosyl-L-methionine = 5-methylcytidine(49) in tRNA + S-adenosyl-L-homocysteine + H(+). It carries out the reaction cytidine(50) in tRNA + S-adenosyl-L-methionine = 5-methylcytidine(50) in tRNA + S-adenosyl-L-homocysteine + H(+). The catalysed reaction is cytidine(34) in tRNA precursor + S-adenosyl-L-methionine = 5-methylcytidine(34) in tRNA precursor + S-adenosyl-L-homocysteine + H(+). It catalyses the reaction a cytidine in mRNA + S-adenosyl-L-methionine = a 5-methylcytidine in mRNA + S-adenosyl-L-homocysteine + H(+). Functionally, RNA cytosine C(5)-methyltransferase that methylates cytosine to 5-methylcytosine (m5C) in various RNAs, such as tRNAs, mRNAs and some long non-coding RNAs (lncRNAs). Involved in various processes, such as epidermal stem cell differentiation, testis differentiation and maternal to zygotic transition during early development: acts by increasing protein synthesis; cytosine C(5)-methylation promoting tRNA stability and preventing mRNA decay. Methylates cytosine to 5-methylcytosine (m5C) at positions 34 and 48 of intron-containing tRNA(Leu)(CAA) precursors, and at positions 48, 49 and 50 of tRNA(Gly)(GCC) precursors. tRNA methylation is required generation of RNA fragments derived from tRNAs (tRFs). Also mediates C(5)-methylation of mitochondrial tRNAs. Catalyzes cytosine C(5)-methylation of mRNAs, leading to stabilize them and prevent mRNA decay. Cytosine C(5)-methylation of mRNAs also regulates mRNA export. Also mediates cytosine C(5)-methylation of non-coding RNAs, such as vault RNAs (vtRNAs), promoting their processing into regulatory small RNAs. Required for proper spindle assembly and chromosome segregation, independently of its methyltransferase activity. The sequence is that of RNA cytosine-C(5)-methyltransferase NSUN2 from Xenopus laevis (African clawed frog).